The following is an 808-amino-acid chain: Enhancer of polycomb homolog 2 (808 aa).

Glycyl lysine isopeptide (Lys-Gly) (interchain with G-Cter in SUMO2) cross-links involve residues Lys135, Lys195, and Lys324. Residues 337–357 are disordered; that stretch reads YPKKPKAEAGIAPQQPTPETL. A Glycyl lysine isopeptide (Lys-Gly) (interchain with G-Cter in SUMO2) cross-link involves residue Lys362. 3 disordered regions span residues 371–397, 595–630, and 645–682; these read QSSD…PDGS, QRQQ…CMSK, and VSAP…LYST. Positions 595 to 614 are enriched in low complexity; sequence QRQQLAQLHQKQQSQHSSQQ. 2 stretches are compositionally biased toward polar residues: residues 615–630 and 658–682; these read THPK…CMSK and EQNT…LYST. The residue at position 755 (Ser755) is a Phosphoserine.

This sequence belongs to the enhancer of polycomb family.

The protein localises to the nucleus. In terms of biological role, may play a role in transcription or DNA repair. The chain is Enhancer of polycomb homolog 2 (Epc2) from Mus musculus (Mouse).